Consider the following 139-residue polypeptide: Small ribosomal subunit protein uS11 (139 aa).

Positions 1–33 (MPPAKKGPATSARKGQKTRRREKKNVPHGAAHI) are disordered. The segment covering 14-23 (KGQKTRRREK) has biased composition (basic residues).

It belongs to the universal ribosomal protein uS11 family. Part of the 30S ribosomal subunit. Interacts with proteins S7 and S18. Binds to IF-3.

Located on the platform of the 30S subunit, it bridges several disparate RNA helices of the 16S rRNA. Forms part of the Shine-Dalgarno cleft in the 70S ribosome. The chain is Small ribosomal subunit protein uS11 from Mycobacterium bovis (strain ATCC BAA-935 / AF2122/97).